Consider the following 493-residue polypeptide: Glutamyl-tRNA(Gln) amidotransferase subunit A (493 aa).

Residues K78 and S158 each act as charge relay system in the active site. The active-site Acyl-ester intermediate is S182.

The protein belongs to the amidase family. GatA subfamily. Heterotrimer of A, B and C subunits.

It catalyses the reaction L-glutamyl-tRNA(Gln) + L-glutamine + ATP + H2O = L-glutaminyl-tRNA(Gln) + L-glutamate + ADP + phosphate + H(+). In terms of biological role, allows the formation of correctly charged Gln-tRNA(Gln) through the transamidation of misacylated Glu-tRNA(Gln) in organisms which lack glutaminyl-tRNA synthetase. The reaction takes place in the presence of glutamine and ATP through an activated gamma-phospho-Glu-tRNA(Gln). The chain is Glutamyl-tRNA(Gln) amidotransferase subunit A from Methylocella silvestris (strain DSM 15510 / CIP 108128 / LMG 27833 / NCIMB 13906 / BL2).